Here is a 472-residue protein sequence, read N- to C-terminus: ATP synthase subunit beta (472 aa).

150-157 serves as a coordination point for ATP; the sequence is GGAGVGKT.

This sequence belongs to the ATPase alpha/beta chains family. F-type ATPases have 2 components, CF(1) - the catalytic core - and CF(0) - the membrane proton channel. CF(1) has five subunits: alpha(3), beta(3), gamma(1), delta(1), epsilon(1). CF(0) has four main subunits: a, b, b' and c.

It is found in the cellular chromatophore membrane. The enzyme catalyses ATP + H2O + 4 H(+)(in) = ADP + phosphate + 5 H(+)(out). Produces ATP from ADP in the presence of a proton gradient across the membrane. The catalytic sites are hosted primarily by the beta subunits. In Rhodobacter capsulatus (Rhodopseudomonas capsulata), this protein is ATP synthase subunit beta.